Consider the following 37-residue polypeptide: Large ribosomal subunit protein bL36 (37 aa).

It belongs to the bacterial ribosomal protein bL36 family.

The sequence is that of Large ribosomal subunit protein bL36 from Histophilus somni (strain 129Pt) (Haemophilus somnus).